Here is a 434-residue protein sequence, read N- to C-terminus: Sensor histidine kinase Hik2 (434 aa).

The GAF domain occupies 16–152; sequence ISLCQSQVRL…EAIAKSLAVA (137 aa). Cysteine 19 is a binding site for [3Fe-4S] cluster. A Histidine kinase domain is found at 182–432; it reads DLLHQLRNPL…TFTLWLRSGE (251 aa). Histidine 185 is subject to Phosphohistidine; by autocatalysis. The G1 box motif lies at 357 to 361; it reads DTGYG. Residues 386 to 390 carry the G2 box motif; sequence GTGLG.

It belongs to the chloroplast sensor kinase protein family. In terms of assembly, exists as monomers, tetramers, hexamers and other higher-order oligomers; all are able to autophosphorylate. Upon treatment with 0.5 M NaCl only tetramers are seen, which are probably inactive. Interacts with both RppA and Rre1. The cofactor is [3Fe-4S] cluster. Autophosphorylates, probably on His-185.

It localises to the cytoplasm. It catalyses the reaction ATP + protein L-histidine = ADP + protein N-phospho-L-histidine.. Its activity is regulated as follows. Autophosphorylation is inhibited by Na(+) but not by Cl(-). Reducing agents dithionite, duroquinol and decyl-plastoquinone, but not NADPH or ferredoxin inhibit autophosphorylation. Oxidation of the Fe-S cluster (with potassium ferricyanide) induces a conformational change that is conducive to its autophosphorylation activity. Member of possibly 2 two-component regulatory system(s) Hik2/Rre1 and Hik2/RppA. Transduces PQ (plastoquinone) redox signals to photosystem gene expression machinery during the adjustment of photosystem stoichiometry. Reduced PQ suppresses its autophosphorylation activity (i.e. kinase activity is higher under oxidizing conditions). Member of two-component regulatory system Hik2/Rre1, controls expression of sigB (sll0306), sll0528, slr1119, slr0852 and ssr3188 in response to hyperosmotic stress. Activity responds to high salt (with a linear response as concentrations rise to 0.5 M NaCl); detects Cl(-) levels. Autophosphorylates and transfers phosphate to Rre1. May transfer phosphate to RppA in a possible Hik2/RppA two-component system. This is Sensor histidine kinase Hik2 from Synechocystis sp. (strain ATCC 27184 / PCC 6803 / Kazusa).